The primary structure comprises 86 residues: Omega-theraphotoxin-Hhn1a 1 (86 aa).

Residues M1–A21 form the signal peptide. A propeptide spanning residues S22–R50 is cleaved from the precursor. Intrachain disulfides connect C52–C66, C59–C71, and C65–C78.

It belongs to the neurotoxin 10 (Hwtx-1) family. 17 (Hntx-9) subfamily. Expressed by the venom gland.

It is found in the secreted. Functionally, ion channel inhibitor. This chain is Omega-theraphotoxin-Hhn1a 1, found in Cyriopagopus hainanus (Chinese bird spider).